Here is a 519-residue protein sequence, read N- to C-terminus: Bifunctional purine biosynthesis protein PurH (519 aa).

One can recognise an MGS-like domain in the interval 1-145; sequence MQPIQRALIS…KNHASVTVVV (145 aa).

It belongs to the PurH family.

It catalyses the reaction (6R)-10-formyltetrahydrofolate + 5-amino-1-(5-phospho-beta-D-ribosyl)imidazole-4-carboxamide = 5-formamido-1-(5-phospho-D-ribosyl)imidazole-4-carboxamide + (6S)-5,6,7,8-tetrahydrofolate. The enzyme catalyses IMP + H2O = 5-formamido-1-(5-phospho-D-ribosyl)imidazole-4-carboxamide. Its pathway is purine metabolism; IMP biosynthesis via de novo pathway; 5-formamido-1-(5-phospho-D-ribosyl)imidazole-4-carboxamide from 5-amino-1-(5-phospho-D-ribosyl)imidazole-4-carboxamide (10-formyl THF route): step 1/1. It participates in purine metabolism; IMP biosynthesis via de novo pathway; IMP from 5-formamido-1-(5-phospho-D-ribosyl)imidazole-4-carboxamide: step 1/1. The sequence is that of Bifunctional purine biosynthesis protein PurH from Allochromatium vinosum (strain ATCC 17899 / DSM 180 / NBRC 103801 / NCIMB 10441 / D) (Chromatium vinosum).